The following is a 151-amino-acid chain: 3-dehydroquinate dehydratase (151 aa).

Y26 (proton acceptor) is an active-site residue. N75, H81, and D88 together coordinate substrate. The active-site Proton donor is the H101. Substrate-binding positions include 102–103 and R112; that span reads LS.

It belongs to the type-II 3-dehydroquinase family. As to quaternary structure, homododecamer.

It carries out the reaction 3-dehydroquinate = 3-dehydroshikimate + H2O. Its pathway is metabolic intermediate biosynthesis; chorismate biosynthesis; chorismate from D-erythrose 4-phosphate and phosphoenolpyruvate: step 3/7. Catalyzes a trans-dehydration via an enolate intermediate. In Shewanella sediminis (strain HAW-EB3), this protein is 3-dehydroquinate dehydratase.